The sequence spans 388 residues: Acyl-CoA dehydrogenase fadE12 (388 aa).

This sequence belongs to the acyl-CoA dehydrogenase family. FAD serves as cofactor.

It carries out the reaction a 2,3-saturated acyl-CoA + A = a 2,3-dehydroacyl-CoA + AH2. The chain is Acyl-CoA dehydrogenase fadE12 (fadE12) from Mycobacterium tuberculosis (strain CDC 1551 / Oshkosh).